A 287-amino-acid chain; its full sequence is Ribosomal RNA small subunit methyltransferase A (287 aa).

S-adenosyl-L-methionine contacts are provided by Asn18, Leu20, Gly45, Glu66, Asp91, and Asn118.

It belongs to the class I-like SAM-binding methyltransferase superfamily. rRNA adenine N(6)-methyltransferase family. RsmA subfamily.

It localises to the cytoplasm. The enzyme catalyses adenosine(1518)/adenosine(1519) in 16S rRNA + 4 S-adenosyl-L-methionine = N(6)-dimethyladenosine(1518)/N(6)-dimethyladenosine(1519) in 16S rRNA + 4 S-adenosyl-L-homocysteine + 4 H(+). Functionally, specifically dimethylates two adjacent adenosines (A1518 and A1519) in the loop of a conserved hairpin near the 3'-end of 16S rRNA in the 30S particle. May play a critical role in biogenesis of 30S subunits. The sequence is that of Ribosomal RNA small subunit methyltransferase A from Haemophilus influenzae (strain ATCC 51907 / DSM 11121 / KW20 / Rd).